The sequence spans 551 residues: Calcium-dependent protein kinase 13 (551 aa).

Gly-2 carries the N-myristoyl glycine lipid modification. The segment at 15–78 (SFKQTASQRH…APADLGSVLG (64 aa)) is disordered. Residues 88 to 346 (YAMGRKLGQG…AHEVLCHPWI (259 aa)) form the Protein kinase domain. ATP-binding positions include 94–102 (LGQGQFGTT) and Lys-117. The Proton acceptor role is filled by Asp-212. Positions 352 to 382 (APDRPLDPAVLSRIKQFSAMNKLKKMALRVI) are autoinhibitory domain. 4 EF-hand domains span residues 389-424 (EEIA…YGST), 425-460 (LKDT…LNKL), 461-496 (EREE…HNMP), and 497-530 (DAFL…GNMG). Ca(2+) is bound by residues Asp-402, Asp-404, Ser-406, Glu-413, Asp-438, Asp-440, Ser-442, Thr-444, Glu-449, Asp-474, Asp-476, Ser-478, Tyr-480, Glu-485, Asp-508, Asp-510, Asp-512, Arg-514, and Glu-519.

This sequence belongs to the protein kinase superfamily. Ser/Thr protein kinase family. CDPK subfamily. In terms of tissue distribution, expressed in vascular tissues of crowns and roots, vascular bundles and central cylinder. Expressed in roots, leaf blades, spikelets and developing seeds.

It localises to the membrane. It catalyses the reaction L-seryl-[protein] + ATP = O-phospho-L-seryl-[protein] + ADP + H(+). The enzyme catalyses L-threonyl-[protein] + ATP = O-phospho-L-threonyl-[protein] + ADP + H(+). With respect to regulation, activated by calcium. Autophosphorylation may play an important role in the regulation of the kinase activity. Its function is as follows. May play a role in signal transduction pathways that involve calcium as a second messenger. May function in signal transduction pathways that positively regulate responses to cold, salt and drought stresses. The sequence is that of Calcium-dependent protein kinase 13 from Oryza sativa subsp. japonica (Rice).